A 385-amino-acid chain; its full sequence is S-adenosylmethionine synthase (385 aa).

Histidine 14 lines the ATP pocket. Mg(2+) is bound at residue aspartate 16. Residue glutamate 42 coordinates K(+). L-methionine contacts are provided by glutamate 55 and glutamine 98. Residues 98–108 (QSGDIAQAVDN) form a flexible loop region. Residues 165–167 (DAK), 232–233 (RF), aspartate 241, 247–248 (RK), alanine 264, and lysine 268 each bind ATP. Aspartate 241 serves as a coordination point for L-methionine. Lysine 272 is an L-methionine binding site.

This sequence belongs to the AdoMet synthase family. Homotetramer; dimer of dimers. The cofactor is Mg(2+). Requires K(+) as cofactor.

Its subcellular location is the cytoplasm. The catalysed reaction is L-methionine + ATP + H2O = S-adenosyl-L-methionine + phosphate + diphosphate. Its pathway is amino-acid biosynthesis; S-adenosyl-L-methionine biosynthesis; S-adenosyl-L-methionine from L-methionine: step 1/1. In terms of biological role, catalyzes the formation of S-adenosylmethionine (AdoMet) from methionine and ATP. The overall synthetic reaction is composed of two sequential steps, AdoMet formation and the subsequent tripolyphosphate hydrolysis which occurs prior to release of AdoMet from the enzyme. The protein is S-adenosylmethionine synthase of Leuconostoc mesenteroides subsp. mesenteroides (strain ATCC 8293 / DSM 20343 / BCRC 11652 / CCM 1803 / JCM 6124 / NCDO 523 / NBRC 100496 / NCIMB 8023 / NCTC 12954 / NRRL B-1118 / 37Y).